A 236-amino-acid chain; its full sequence is Phosphoribosylaminoimidazole-succinocarboxamide synthase (236 aa).

It belongs to the SAICAR synthetase family.

It catalyses the reaction 5-amino-1-(5-phospho-D-ribosyl)imidazole-4-carboxylate + L-aspartate + ATP = (2S)-2-[5-amino-1-(5-phospho-beta-D-ribosyl)imidazole-4-carboxamido]succinate + ADP + phosphate + 2 H(+). Its pathway is purine metabolism; IMP biosynthesis via de novo pathway; 5-amino-1-(5-phospho-D-ribosyl)imidazole-4-carboxamide from 5-amino-1-(5-phospho-D-ribosyl)imidazole-4-carboxylate: step 1/2. This chain is Phosphoribosylaminoimidazole-succinocarboxamide synthase, found in Pseudomonas paraeruginosa (strain DSM 24068 / PA7) (Pseudomonas aeruginosa (strain PA7)).